We begin with the raw amino-acid sequence, 167 residues long: Biogenesis of lysosome-related organelles complex 1 subunit 6 (167 aa).

Over residues 1–11 (MLKSSNINSVL) the composition is skewed to polar residues. A disordered region spans residues 1–38 (MLKSSNINSVLNELPNDPARDSTAQSSHNGKPKQDAET). Residues 102–160 (ARLNDMMSDVKRYKDKLTKIKKEMQGVYQRTKELKKRAANVAACKQRDYQRKLERLQHE) are a coiled coil.

Belongs to the BLOC1S6 family. In terms of assembly, component of the biogenesis of lysosome-related organelles complex-1 (BLOC-1) composed of Blos1, Blos2, Blos3, Blos4, Dysb, Muted, Pldn and Snapin. Interacts with Blos1, Blos4 and Dysb.

The protein localises to the synapse. The protein resides in the cytoplasm. It is found in the cytoskeleton. It localises to the myofibril. Its subcellular location is the sarcomere. The protein localises to the z line. Its function is as follows. Component of the biogenesis of lysosome-related organelles complex-1 (BLOC-1) involved in pigment granule biogenesis and membrane trafficking in synapses. In response to high synaptic activity at neuromuscular junctions, plays a key role in promoting efficient synaptic vesicle recycling and re-formation through early endosomes. The polypeptide is Biogenesis of lysosome-related organelles complex 1 subunit 6 (Drosophila melanogaster (Fruit fly)).